Here is a 117-residue protein sequence, read N- to C-terminus: Immunoglobulin lambda variable 2 (117 aa).

A signal peptide spans 1–19; that stretch reads MAWTSLILSLLALCSGASS. Gln20 is modified (pyrrolidone carboxylic acid). The 98-residue stretch at 20-117 folds into the Ig-like domain; sequence QAVVTQESAL…FCALWYSTHF (98 aa).

The chain is Immunoglobulin lambda variable 2 from Mus musculus (Mouse).